The chain runs to 301 residues: 33 kDa chaperonin (301 aa).

2 cysteine pairs are disulfide-bonded: Cys-240-Cys-242 and Cys-273-Cys-276.

It belongs to the HSP33 family. In terms of processing, under oxidizing conditions two disulfide bonds are formed involving the reactive cysteines. Under reducing conditions zinc is bound to the reactive cysteines and the protein is inactive.

It is found in the cytoplasm. Its function is as follows. Redox regulated molecular chaperone. Protects both thermally unfolding and oxidatively damaged proteins from irreversible aggregation. Plays an important role in the bacterial defense system toward oxidative stress. This Rippkaea orientalis (strain PCC 8801 / RF-1) (Cyanothece sp. (strain PCC 8801)) protein is 33 kDa chaperonin.